We begin with the raw amino-acid sequence, 197 residues long: Na(+)-translocating NADH-quinone reductase subunit E (197 aa).

6 consecutive transmembrane segments (helical) span residues 11-31, 35-55, 76-96, 108-128, 139-159, and 175-195; these read SVFI…FLAV, VSTA…SVPA, FLKF…LEMF, LGIY…VSFM, VVYG…LAGI, and LGIT…FSGI.

It belongs to the NqrDE/RnfAE family. Composed of six subunits; NqrA, NqrB, NqrC, NqrD, NqrE and NqrF.

The protein localises to the cell inner membrane. It catalyses the reaction a ubiquinone + n Na(+)(in) + NADH + H(+) = a ubiquinol + n Na(+)(out) + NAD(+). NQR complex catalyzes the reduction of ubiquinone-1 to ubiquinol by two successive reactions, coupled with the transport of Na(+) ions from the cytoplasm to the periplasm. NqrA to NqrE are probably involved in the second step, the conversion of ubisemiquinone to ubiquinol. The sequence is that of Na(+)-translocating NADH-quinone reductase subunit E from Neisseria meningitidis serogroup A / serotype 4A (strain DSM 15465 / Z2491).